The following is a 976-amino-acid chain: Vacuolar membrane protease (976 aa).

Over 1-15 the chain is Cytoplasmic; the sequence is MKLKSVFRSVLKYRK. Residues 16-36 traverse the membrane as a helical segment; sequence TNLSLLLLITYSIITLLYIFD. The Vacuolar segment spans residues 37-359; sequence HERYKLNLPK…KFFVISAKTL (323 aa). Asn96 and Asn121 each carry an N-linked (GlcNAc...) asparagine glycan. Residues His156 and Asp168 each contribute to the Zn(2+) site. N-linked (GlcNAc...) asparagine glycosylation occurs at Asn189. The active-site Proton acceptor is the Glu200. Glu201 lines the Zn(2+) pocket. N-linked (GlcNAc...) asparagine glycosylation is found at Asn212 and Asn217. Zn(2+) is bound by residues Glu226 and His300. A helical transmembrane segment spans residues 360-380; sequence FYWNCIFLLVSPVVAIGLYLI. Over 381–392 the chain is Cytoplasmic; sequence SRDRMTWKSHSW. A helical membrane pass occupies residues 393–412; it reads LSWTRFPLSLAAGIIVQKLF. The Vacuolar segment spans residues 413 to 428; that stretch reads SNDIIRSNPLTFSRNY. The helical transmembrane segment at 429–449 threads the bilayer; the sequence is FWPISAFFTQVIFTSYVLINC. Topologically, residues 450–461 are cytoplasmic; that stretch reads SNFFFPCADMKS. The helical transmembrane segment at 462-482 threads the bilayer; that stretch reads LSIIELFIILWTILLFTSKLL. The Vacuolar segment spans residues 483–496; the sequence is YSSDYRYTGLYPLS. Residues 497-517 form a helical membrane-spanning segment; that stretch reads IFFLLSTIAAILRLLALALGM. Over 518–627 the chain is Cytoplasmic; that stretch reads RTRKRLGREC…NSLKLEYTDY (110 aa). Positions 528 to 610 are disordered; that stretch reads RDHHSNYSSH…PLLKGSNSME (83 aa). The span at 549–558 shows a compositional bias: polar residues; the sequence is NLEQPQDQFT. A compositionally biased stretch (low complexity) spans 559-570; it reads SSQDDQASIQDD. The segment covering 582–601 has biased composition (basic and acidic residues); that stretch reads NVDEDHGMDSSSQQHDERVP. A helical transmembrane segment spans residues 628–648; the sequence is AWIIQFLLIVPIPSFILFNSV. Topologically, residues 649 to 668 are vacuolar; sequence DVIMDALNHTVQEGSKATFD. The N-linked (GlcNAc...) asparagine glycan is linked to Asn656. The chain crosses the membrane as a helical span at residues 669–689; that stretch reads VLRFGMVGSILMALPILPFFY. The Cytoplasmic segment spans residues 690–692; the sequence is KVN. Residues 693–713 form a helical membrane-spanning segment; the sequence is YITISLTALLFLISASKTLLV. The Vacuolar portion of the chain corresponds to 714-976; it reads HPFTNSNPLK…LVIVKDAIIL (263 aa). 5 N-linked (GlcNAc...) asparagine glycosylation sites follow: Asn768, Asn796, Asn811, Asn866, and Asn937.

Belongs to the peptidase M28 family. Requires Zn(2+) as cofactor.

It is found in the vacuole membrane. In terms of biological role, may be involved in vacuolar sorting and osmoregulation. The polypeptide is Vacuolar membrane protease (Saccharomyces cerevisiae (strain Lalvin EC1118 / Prise de mousse) (Baker's yeast)).